Reading from the N-terminus, the 303-residue chain is Foldase protein PrsA (303 aa).

A signal peptide spans 1 to 20 (MMKKWLLAAASLLMVVTLAG). Cys21 carries the N-palmitoyl cysteine lipid modification. Cys21 carries the S-diacylglycerol cysteine lipid modification. A PpiC domain is found at 137-233 (EPKVEVQHIL…YGYHVIRMIK (97 aa)).

Belongs to the PrsA family.

The protein localises to the cell membrane. It carries out the reaction [protein]-peptidylproline (omega=180) = [protein]-peptidylproline (omega=0). Its function is as follows. Plays a major role in protein secretion by helping the post-translocational extracellular folding of several secreted proteins. In Latilactobacillus sakei subsp. sakei (strain 23K) (Lactobacillus sakei subsp. sakei), this protein is Foldase protein PrsA.